Consider the following 445-residue polypeptide: Dolichyl-diphosphooligosaccharide--protein glycosyltransferase 48 kDa subunit (445 aa).

The first 20 residues, 1-20, serve as a signal peptide directing secretion; that stretch reads MRWLPGLLLIASIGFHQSLA. At 21–405 the chain is on the lumenal side; the sequence is DRVLVLGETA…YERFIRSAYP (385 aa). The chain crosses the membrane as a helical span at residues 406–426; sequence YYASSFSMMAGLVLFSIVYLY. At 427 to 445 the chain is on the cytoplasmic side; it reads HKDTPVKGAKVLDSEKKKN.

This sequence belongs to the DDOST 48 kDa subunit family. In terms of assembly, component of the oligosaccharyltransferase (OST) complex.

The protein resides in the endoplasmic reticulum membrane. The protein operates within protein modification; protein glycosylation. Its function is as follows. Subunit of the oligosaccharyl transferase (OST) complex that catalyzes the initial transfer of a defined glycan (Glc(3)Man(9)GlcNAc(2) in eukaryotes) from the lipid carrier dolichol-pyrophosphate to an asparagine residue within an Asn-X-Ser/Thr consensus motif in nascent polypeptide chains, the first step in protein N-glycosylation. N-glycosylation occurs cotranslationally and the complex associates with the Sec61 complex at the channel-forming translocon complex that mediates protein translocation across the endoplasmic reticulum (ER). All subunits are required for a maximal enzyme activity. Required for the assembly of both SST3A- and SS3B-containing OST complexes. Required for normal lifespan. The chain is Dolichyl-diphosphooligosaccharide--protein glycosyltransferase 48 kDa subunit from Caenorhabditis elegans.